The chain runs to 929 residues: Bifunctional uridylyltransferase/uridylyl-removing enzyme (929 aa).

The segment at 1 to 383 (MDSVTTEHKQ…RPTPAKRRVP (383 aa)) is uridylyltransferase. The uridylyl-removing stretch occupies residues 384–739 (DSDDFIVDNN…VGFDEVRGVT (356 aa)). The region spanning 499-622 (VDEHLIRCVG…VQSVEQMKLL (124 aa)) is the HD domain. 2 ACT domains span residues 740-822 (ELTI…VVAR) and 850-927 (VIEV…AVQP).

The protein belongs to the GlnD family. The cofactor is Mg(2+).

It catalyses the reaction [protein-PII]-L-tyrosine + UTP = [protein-PII]-uridylyl-L-tyrosine + diphosphate. It carries out the reaction [protein-PII]-uridylyl-L-tyrosine + H2O = [protein-PII]-L-tyrosine + UMP + H(+). Uridylyltransferase (UTase) activity is inhibited by glutamine, while glutamine activates uridylyl-removing (UR) activity. Modifies, by uridylylation and deuridylylation, the PII regulatory proteins (GlnB and homologs), in response to the nitrogen status of the cell that GlnD senses through the glutamine level. Under low glutamine levels, catalyzes the conversion of the PII proteins and UTP to PII-UMP and PPi, while under higher glutamine levels, GlnD hydrolyzes PII-UMP to PII and UMP (deuridylylation). Thus, controls uridylylation state and activity of the PII proteins, and plays an important role in the regulation of nitrogen fixation and metabolism. The sequence is that of Bifunctional uridylyltransferase/uridylyl-removing enzyme from Bradyrhizobium diazoefficiens (strain JCM 10833 / BCRC 13528 / IAM 13628 / NBRC 14792 / USDA 110).